Consider the following 346-residue polypeptide: F(420)H(2) dehydrogenase subunit H (346 aa).

Transmembrane regions (helical) follow at residues 18–38, 91–111, 125–145, 170–190, 196–216, 257–277, 284–304, and 326–346; these read GIVG…AVWL, IFML…AVFI, ISVL…FMVA, PLGI…IVDI, LHWN…SLMA, ILGS…PGFI, GIIV…MVII, and LLPL…YLGA.

Belongs to the complex I subunit 1 family. In terms of assembly, the FPO complex is composed of at least 13 different subunits. FpoA, FpoH, FpoJ, FpoK, FpoL, FpoM and FpoN proteins constitute the membrane sector of the complex.

The protein localises to the cell membrane. It catalyses the reaction methanophenazine + reduced coenzyme F420-(gamma-L-Glu)(n) = dihydromethanophenazine + oxidized coenzyme F420-(gamma-L-Glu)(n) + H(+). Component of the F(420)H(2) dehydrogenase (FPO complex) which is part of the energy-conserving F(420)H(2):heterodisulfide oxidoreductase system. The membrane-bound electron transfer system of the complex plays an important role in the metabolism of methylotrophic methanogens when the organisms grow on methanol or methylamines. Catalyzes the oxidation of methanophenazine to dihydromethanophenazine. It shuttles electrons from F(420)H(2), via FAD and iron-sulfur (Fe-S) centers, to methanophenazine (an electron carrier in the membrane). It couples the redox reaction to proton translocation (for every two electrons transferred, two hydrogen ions are translocated across the cytoplasmic membrane), and thus conserves the redox energy in a proton gradient. The polypeptide is F(420)H(2) dehydrogenase subunit H (Methanosarcina barkeri (strain Fusaro / DSM 804)).